A 244-amino-acid polypeptide reads, in one-letter code: Lymphotoxin-beta (244 aa).

The Cytoplasmic portion of the chain corresponds to 1–18; sequence MGALGLEGRGGRLQGRGS. A helical; Signal-anchor for type II membrane protein transmembrane segment spans residues 19–48; it reads LLLAVAGATSLVTLLLAVPITVLAVLALVP. Topologically, residues 49–244 are extracellular; it reads QDQGGLVTET…KTFFGAVMVG (196 aa). The region spanning 88 to 243 is the THD domain; it reads PAAHLIGAPL…GKTFFGAVMV (156 aa). A glycan (N-linked (GlcNAc...) asparagine) is linked at asparagine 222.

The protein belongs to the tumor necrosis factor family. Heterotrimer of either two LTB and one LTA subunits or (less prevalent) one LTB and two LTA subunits. As to expression, spleen and thymus.

The protein resides in the membrane. Its function is as follows. Cytokine that binds to LTBR/TNFRSF3. May play a specific role in immune response regulation. Provides the membrane anchor for the attachment of the heterotrimeric complex to the cell surface. Isoform 2 is probably non-functional. The polypeptide is Lymphotoxin-beta (LTB) (Homo sapiens (Human)).